The sequence spans 111 residues: Probable monothiol glutaredoxin 2 (111 aa).

Positions Leu-7–Ile-109 constitute a Glutaredoxin domain. Lys-24 lines the glutathione pocket. Cys-32 provides a ligand contact to [2Fe-2S] cluster. Residues Arg-61, Phe-73, and Cys-86–Asp-87 contribute to the glutathione site.

Belongs to the glutaredoxin family. Monothiol subfamily.

The protein is Probable monothiol glutaredoxin 2 (grxC2) of Rickettsia typhi (strain ATCC VR-144 / Wilmington).